The following is a 384-amino-acid chain: S-adenosylmethionine synthase (384 aa).

An ATP-binding site is contributed by His-15. Mg(2+) is bound at residue Asp-17. Glu-43 contributes to the K(+) binding site. Residues Glu-56 and Gln-99 each contribute to the L-methionine site. The flexible loop stretch occupies residues 99-109 (QSADINQGVDR). ATP-binding positions include 164–166 (DAK), 230–231 (RF), Asp-239, 245–246 (RK), Ala-262, and Lys-266. Asp-239 serves as a coordination point for L-methionine. Lys-270 provides a ligand contact to L-methionine.

It belongs to the AdoMet synthase family. As to quaternary structure, homotetramer; dimer of dimers. Mg(2+) serves as cofactor. K(+) is required as a cofactor.

It is found in the cytoplasm. The enzyme catalyses L-methionine + ATP + H2O = S-adenosyl-L-methionine + phosphate + diphosphate. The protein operates within amino-acid biosynthesis; S-adenosyl-L-methionine biosynthesis; S-adenosyl-L-methionine from L-methionine: step 1/1. Functionally, catalyzes the formation of S-adenosylmethionine (AdoMet) from methionine and ATP. The overall synthetic reaction is composed of two sequential steps, AdoMet formation and the subsequent tripolyphosphate hydrolysis which occurs prior to release of AdoMet from the enzyme. This chain is S-adenosylmethionine synthase, found in Haemophilus influenzae (strain PittEE).